Here is a 20-residue protein sequence, read N- to C-terminus: Alanine aminotransferase 1 (20 aa).

K11 carries the post-translational modification N6-(pyridoxal phosphate)lysine. The N-linked (Glc) (glycation) lysine; in vitro glycan is linked to K11.

Belongs to the class-I pyridoxal-phosphate-dependent aminotransferase family. Alanine aminotransferase subfamily. In terms of assembly, homodimer. The cofactor is pyridoxal 5'-phosphate. Post-translationally, glycation of Lys-11 inactivates the enzyme.

Its subcellular location is the cytoplasm. The catalysed reaction is L-alanine + 2-oxoglutarate = pyruvate + L-glutamate. It participates in amino-acid degradation; L-alanine degradation via transaminase pathway; pyruvate from L-alanine: step 1/1. Its function is as follows. Catalyzes the reversible transamination between alanine and 2-oxoglutarate to form pyruvate and glutamate. Participates in cellular nitrogen metabolism and also in liver gluconeogenesis starting with precursors transported from skeletal muscles. The protein is Alanine aminotransferase 1 (GPT) of Sus scrofa (Pig).